Here is a 196-residue protein sequence, read N- to C-terminus: Pyridoxine/pyridoxamine 5'-phosphate oxidase (196 aa).

FMN is bound by residues 46 to 51 (RNVLYK), 61 to 62 (FT), R67, K68, and Q90. K51 provides a ligand contact to substrate. Substrate-binding residues include Y108, R112, and S116. FMN-binding positions include 125 to 126 (QS) and W169. 175–177 (RLH) is a binding site for substrate. Residue R179 coordinates FMN.

This sequence belongs to the pyridoxamine 5'-phosphate oxidase family. Homodimer. Requires FMN as cofactor.

The enzyme catalyses pyridoxamine 5'-phosphate + O2 + H2O = pyridoxal 5'-phosphate + H2O2 + NH4(+). It carries out the reaction pyridoxine 5'-phosphate + O2 = pyridoxal 5'-phosphate + H2O2. Its pathway is cofactor metabolism; pyridoxal 5'-phosphate salvage; pyridoxal 5'-phosphate from pyridoxamine 5'-phosphate: step 1/1. The protein operates within cofactor metabolism; pyridoxal 5'-phosphate salvage; pyridoxal 5'-phosphate from pyridoxine 5'-phosphate: step 1/1. Catalyzes the oxidation of either pyridoxine 5'-phosphate (PNP) or pyridoxamine 5'-phosphate (PMP) into pyridoxal 5'-phosphate (PLP). The sequence is that of Pyridoxine/pyridoxamine 5'-phosphate oxidase from Coxiella burnetii (strain RSA 493 / Nine Mile phase I).